Here is a 222-residue protein sequence, read N- to C-terminus: UPF0758 protein TM_1557 (222 aa).

An MPN domain is found at 101 to 222; that stretch reads KLDSSVKVYK…YFSFREEGEL (122 aa). Residues H171, H173, and D184 each contribute to the Zn(2+) site. The short motif at 171–184 is the JAMM motif element; sequence HNHPSGDPTPSKED.

The protein belongs to the UPF0758 family.

In Thermotoga maritima (strain ATCC 43589 / DSM 3109 / JCM 10099 / NBRC 100826 / MSB8), this protein is UPF0758 protein TM_1557.